Reading from the N-terminus, the 202-residue chain is Nucleoid occlusion factor SlmA (202 aa).

The HTH tetR-type domain maps to 14–75; the sequence is KERQQQVLEV…ALIERIEQTL (62 aa). The H-T-H motif DNA-binding region spans 38-57; that stretch reads TTERLAKAVGVSEGALYRYF.

This sequence belongs to the nucleoid occlusion factor SlmA family. In terms of assembly, homodimer. Interacts with FtsZ.

The protein localises to the cytoplasm. Its subcellular location is the nucleoid. Its function is as follows. Required for nucleoid occlusion (NO) phenomenon, which prevents Z-ring formation and cell division over the nucleoid. Acts as a DNA-associated cell division inhibitor that binds simultaneously chromosomal DNA and FtsZ, and disrupts the assembly of FtsZ polymers. SlmA-DNA-binding sequences (SBS) are dispersed on non-Ter regions of the chromosome, preventing FtsZ polymerization at these regions. The sequence is that of Nucleoid occlusion factor SlmA from Haemophilus ducreyi (strain 35000HP / ATCC 700724).